Here is a 391-residue protein sequence, read N- to C-terminus: Ribonuclease 3-like protein 2 (391 aa).

The short motif at 7 to 26 (PEYNFPAITRCSLSNSLPHR) is the Nuclear export signal element. Residues 60–203 (MEAVEKILNY…LAGAVYVDVN (144 aa)) form the RNase III domain. Mg(2+) is bound by residues glutamate 96, aspartate 189, and glutamate 192. DRBM domains are found at residues 218–294 (EPIV…KLSE) and 313–387 (HAKT…ALRK). Cysteine 240 and cysteine 322 are disulfide-bonded. Positions 371–387 (KKAESSSAYHMIRALRK) match the Bipartite nuclear localization motif.

Homodimer; disulfide-linked. The cofactor is Mg(2+). It depends on Mn(2+) as a cofactor. In terms of tissue distribution, expressed in seeds, leaves and flower buds.

Its subcellular location is the nucleus. It localises to the cytoplasm. Its function is as follows. Ribonuclease that cleaves double-stranded RNA (dsRNA). Required for 3'-external transcribed spacer (ETS) cleavage of the pre-rRNA precursors. May promote the production of 21 nucleotide small interfering RNA (siRNA) during post-transcriptional gene silencing (PTGS). This is Ribonuclease 3-like protein 2 (RTL2) from Arabidopsis thaliana (Mouse-ear cress).